The following is a 334-amino-acid chain: Beta-hexosaminidase (334 aa).

Residues Asp57, Arg65, Arg128, and 158 to 159 (KH) each bind substrate. The active-site Proton donor/acceptor is the His171. The Nucleophile role is filled by Asp242.

The protein belongs to the glycosyl hydrolase 3 family. NagZ subfamily.

The protein resides in the cytoplasm. It catalyses the reaction Hydrolysis of terminal non-reducing N-acetyl-D-hexosamine residues in N-acetyl-beta-D-hexosaminides.. It participates in cell wall biogenesis; peptidoglycan recycling. Functionally, plays a role in peptidoglycan recycling by cleaving the terminal beta-1,4-linked N-acetylglucosamine (GlcNAc) from peptide-linked peptidoglycan fragments, giving rise to free GlcNAc, anhydro-N-acetylmuramic acid and anhydro-N-acetylmuramic acid-linked peptides. This chain is Beta-hexosaminidase, found in Methylococcus capsulatus (strain ATCC 33009 / NCIMB 11132 / Bath).